Reading from the N-terminus, the 154-residue chain is NADPH-dependent 7-cyano-7-deazaguanine reductase (154 aa).

The segment covering methionine 1–serine 21 has biased composition (polar residues). Positions methionine 1–glutamate 28 are disordered. Cysteine 52 functions as the Thioimide intermediate in the catalytic mechanism. Aspartate 59 functions as the Proton donor in the catalytic mechanism. Residues valine 74 to serine 76 and histidine 93 to glutamate 94 each bind substrate.

It belongs to the GTP cyclohydrolase I family. QueF type 1 subfamily.

Its subcellular location is the cytoplasm. The enzyme catalyses 7-aminomethyl-7-carbaguanine + 2 NADP(+) = 7-cyano-7-deazaguanine + 2 NADPH + 3 H(+). The protein operates within tRNA modification; tRNA-queuosine biosynthesis. In terms of biological role, catalyzes the NADPH-dependent reduction of 7-cyano-7-deazaguanine (preQ0) to 7-aminomethyl-7-deazaguanine (preQ1). The protein is NADPH-dependent 7-cyano-7-deazaguanine reductase of Rhizobium johnstonii (strain DSM 114642 / LMG 32736 / 3841) (Rhizobium leguminosarum bv. viciae).